Reading from the N-terminus, the 264-residue chain is Small ribosomal subunit protein eS1A (264 aa).

The disordered stretch occupies residues 233 to 264 (GEGGGTGKPAGDETGAKVERADGYEPPVQESV). Over residues 242 to 255 (AGDETGAKVERADG) the composition is skewed to basic and acidic residues.

It belongs to the eukaryotic ribosomal protein eS1 family. In terms of assembly, component of the small ribosomal subunit. Mature ribosomes consist of a small (40S) and a large (60S) subunit. The 40S subunit contains about 33 different proteins and 1 molecule of RNA (18S). The 60S subunit contains about 49 different proteins and 3 molecules of RNA (28S, 5.8S and 5S). Part of the small subunit (SSU) processome, composed of more than 70 proteins and the RNA chaperone small nucleolar RNA (snoRNA) U3.

The protein localises to the cytoplasm. The protein resides in the nucleus. Its subcellular location is the nucleolus. In terms of biological role, component of the small ribosomal subunit. The ribosome is a large ribonucleoprotein complex responsible for the synthesis of proteins in the cell. Part of the small subunit (SSU) processome, first precursor of the small eukaryotic ribosomal subunit. During the assembly of the SSU processome in the nucleolus, many ribosome biogenesis factors, an RNA chaperone and ribosomal proteins associate with the nascent pre-rRNA and work in concert to generate RNA folding, modifications, rearrangements and cleavage as well as targeted degradation of pre-ribosomal RNA by the RNA exosome. May play a role during erythropoiesis. This chain is Small ribosomal subunit protein eS1A (rps3a-a), found in Xenopus laevis (African clawed frog).